A 102-amino-acid polypeptide reads, in one-letter code: Putative pterin-4-alpha-carbinolamine dehydratase (102 aa).

It belongs to the pterin-4-alpha-carbinolamine dehydratase family.

The catalysed reaction is (4aS,6R)-4a-hydroxy-L-erythro-5,6,7,8-tetrahydrobiopterin = (6R)-L-erythro-6,7-dihydrobiopterin + H2O. This chain is Putative pterin-4-alpha-carbinolamine dehydratase, found in Burkholderia ambifaria (strain ATCC BAA-244 / DSM 16087 / CCUG 44356 / LMG 19182 / AMMD) (Burkholderia cepacia (strain AMMD)).